The chain runs to 206 residues: Endoplasmic reticulum transmembrane protein YET-like (206 aa).

Over 1-2 the chain is Lumenal; it reads ME. Residues 3–23 form a helical membrane-spanning segment; that stretch reads FLMTLVFLVLLVEIVFCTFFM. Over 24-46 the chain is Cytoplasmic; the sequence is LPVSMHLRKNVYNKLDKLFGGQN. A helical membrane pass occupies residues 47-67; it reads AKIFLKVLALLVIIVFCDSIV. Topologically, residues 68–101 are lumenal; that stretch reads NSYNINKKLHTPELTGAKFDRQNEYTRMFRYQRN. A helical transmembrane segment spans residues 102-122; sequence SYICGFCLYLFFLIYRSQGII. At 123 to 206 the chain is on the cytoplasmic side; the sequence is SQLSNVEASK…KKPKTQKKDD (84 aa). Positions 140–198 form a coiled coil; that stretch reads KNNLNTVETLLSENEKLKTEIKDLKKMEKEHKAMKSQAENTTKEYLKLQEEYNQLLGKK. A Di-lysine motif motif is present at residues 203–206; the sequence is KKDD.

Belongs to the BCAP29/BCAP31 family.

It localises to the endoplasmic reticulum membrane. In terms of biological role, may play a role in anterograde transport of membrane proteins from the endoplasmic reticulum to the Golgi. The protein is Endoplasmic reticulum transmembrane protein YET-like of Dictyostelium discoideum (Social amoeba).